Reading from the N-terminus, the 372-residue chain is Histidinol-phosphate aminotransferase (372 aa).

Position 234 is an N6-(pyridoxal phosphate)lysine (lysine 234).

It belongs to the class-II pyridoxal-phosphate-dependent aminotransferase family. Histidinol-phosphate aminotransferase subfamily. As to quaternary structure, homodimer. Requires pyridoxal 5'-phosphate as cofactor.

It carries out the reaction L-histidinol phosphate + 2-oxoglutarate = 3-(imidazol-4-yl)-2-oxopropyl phosphate + L-glutamate. Its pathway is amino-acid biosynthesis; L-histidine biosynthesis; L-histidine from 5-phospho-alpha-D-ribose 1-diphosphate: step 7/9. This Corynebacterium efficiens (strain DSM 44549 / YS-314 / AJ 12310 / JCM 11189 / NBRC 100395) protein is Histidinol-phosphate aminotransferase (hisC).